The chain runs to 1141 residues: cGMP-inhibited 3',5'-cyclic phosphodiesterase 3A (1141 aa).

Positions 1–41 are disordered; that stretch reads MAVRGEAAQDWAKPGLRGPSPAPVARGDHRCRGGSPSSPRG. The helical transmembrane segment at 62–82 threads the bilayer; that stretch reads SALCAGSLSVLLALLVRLVGG. The disordered stretch occupies residues 89-111; the sequence is ESSQEAAAEEEEEEGARGGVFPG. 5 consecutive transmembrane segments (helical) span residues 127–147, 157–177, 182–202, 207–227, and 229–249; these read LQPAALLFSLLCAFFWMGLCL, AVALLAACCAGEALVQLSLGV, LLSLPAAGVLLSCLGGATWLV, LGVLMVALTSALRTVALVSLE, and FKVAWRPYLAYLAAVLGLLLA. A disordered region spans residues 262 to 309; that stretch reads PAPPRERFGSQSSARTKEEIPGWKRRRRSSSVVAGEMSGCGGKSHRRT. Position 310 is a phosphoserine (Ser310). A compositionally biased stretch (low complexity) spans 433 to 445; the sequence is RVSSTWTTTTSAT. The interval 433 to 479 is disordered; the sequence is RVSSTWTTTTSATGLPTLEPAPVRRDRSASIKPHEAPSPSAVNPDSW. The span at 454–467 shows a compositional bias: basic and acidic residues; the sequence is PVRRDRSASIKPHE. 4 positions are modified to phosphoserine: Ser492, Ser520, Ser524, and Ser533. Residues 504 to 643 form a disordered region; that stretch reads HVKAKKQNRP…SDILQNDEEA (140 aa). A compositionally biased stretch (pro residues) spans 522-532; it reads VPSPSSSPPQG. The segment covering 618 to 637 has biased composition (polar residues); it reads TSQVTSDYETNNNSDSSDIL. Positions 669-1141 are interaction with SLFN12; that stretch reads KPILAPEPLV…EETLAPQPDL (473 aa). In terms of domain architecture, PDEase spans 674–1093; the sequence is PEPLVMDNLD…MMWKKVIEEE (420 aa). His752 serves as the catalytic Proton donor. His752 serves as a coordination point for AMP. Mn(2+)-binding residues include His756, His836, Asp837, and Asp950. AMP is bound by residues Asp837, Asp950, and Gln1001. Residue Asp837 coordinates Mg(2+). Disordered stretches follow at residues 1024 to 1062 and 1098 to 1141; these read GKWVDDSDDSGDTDDPEEEEEEAETPHEEETCENSEAPR and GTEN…QPDL. The segment covering 1029–1046 has biased composition (acidic residues); the sequence is DSDDSGDTDDPEEEEEEA. Residue Ser1033 is modified to Phosphoserine. Thr1036 is modified (phosphothreonine). Positions 1098-1113 are enriched in polar residues; that stretch reads GTENQAPDQAPLQHSS. Residue Lys1120 forms a Glycyl lysine isopeptide (Lys-Gly) (interchain with G-Cter in SUMO2) linkage.

Belongs to the cyclic nucleotide phosphodiesterase family. PDE3 subfamily. In terms of assembly, homodimer. Interacts with PDE3A; direct low affinity interaction which is stimulated by binding of 17beta-estradiol/E2 to PDE3A and that positively regulates the ribonuclease activity of SLFN12. Mn(2+) serves as cofactor. Requires Mg(2+) as cofactor.

Its subcellular location is the membrane. The protein localises to the cytoplasm. It is found in the cytosol. The enzyme catalyses a nucleoside 3',5'-cyclic phosphate + H2O = a nucleoside 5'-phosphate + H(+). The catalysed reaction is 3',5'-cyclic AMP + H2O = AMP + H(+). It carries out the reaction 3',5'-cyclic GMP + H2O = GMP + H(+). It catalyses the reaction 3',5'-cyclic UMP + H2O = UMP + H(+). Cyclic nucleotide phosphodiesterase with specificity for the second messengers cAMP and cGMP, which are key regulators of many important physiological processes. Also has activity toward cUMP. Independently of its catalytic activity it is part of an E2/17beta-estradiol-induced pro-apoptotic signaling pathway. E2 stabilizes the PDE3A/SLFN12 complex in the cytosol, promoting the dephosphorylation of SLFN12 and activating its pro-apoptotic ribosomal RNA/rRNA ribonuclease activity. This apoptotic pathway might be relevant in tissues with high concentration of E2 and be for instance involved in placenta remodeling. The polypeptide is cGMP-inhibited 3',5'-cyclic phosphodiesterase 3A (Rattus norvegicus (Rat)).